Reading from the N-terminus, the 690-residue chain is Proprotein convertase subtilisin/kexin type 9 (690 aa).

The first 28 residues, methionine 1–alanine 28, serve as a signal peptide directing secretion. A propeptide spanning residues glutamine 29–glutamine 150 is cleaved from the precursor. Residue tyrosine 36 is modified to Sulfotyrosine. Phosphoserine is present on serine 45. Residues threonine 75 to valine 147 form the Inhibitor I9 domain. A Peptidase S8 domain is found at proline 153–tryptophan 459. Catalysis depends on charge relay system residues aspartate 184 and histidine 224. Cystine bridges form between cysteine 221–cysteine 253 and cysteine 321–cysteine 356. Catalysis depends on serine 384, which acts as the Charge relay system. Positions glycine 448–glutamine 690 are C-terminal domain. 3 disulfides stabilise this stretch: cysteine 455-cysteine 525, cysteine 475-cysteine 524, and cysteine 484-cysteine 507. Residue asparagine 531 is glycosylated (N-linked (GlcNAc...) asparagine). Disulfide bonds link cysteine 532–cysteine 599, cysteine 550–cysteine 598, cysteine 560–cysteine 586, cysteine 606–cysteine 677, cysteine 624–cysteine 676, and cysteine 633–cysteine 652. Position 686 is a phosphoserine (serine 686).

It belongs to the peptidase S8 family. Monomer. Can self-associate to form dimers and higher multimers which may have increased LDLR degrading activity. The precursor protein but not the mature protein may form multimers. Interacts with APOB, VLDLR, LRP8/APOER2 and BACE1. The full-length immature form (pro-PCSK9) interacts with SCNN1A, SCNN1B and SCNN1G. The pro-PCSK9 form (via C-terminal domain) interacts with LDLR. Interacts (via the C-terminal domain) with ANXA2 (via repeat Annexin 1); the interaction inhibits the degradation of LDLR. Ca(2+) serves as cofactor. In terms of processing, cleavage by furin and PCSK5 generates a truncated inactive protein that is unable to induce LDLR degradation. Post-translationally, undergoes autocatalytic cleavage in the endoplasmic reticulum to release the propeptide from the N-terminus and the cleavage of the propeptide is strictly required for its maturation and activation. The cleaved propeptide however remains associated with the catalytic domain through non-covalent interactions, preventing potential substrates from accessing its active site. As a result, it is secreted from cells as a propeptide-containing, enzymatically inactive protein. Phosphorylation protects the propeptide against proteolysis.

The protein localises to the cytoplasm. Its subcellular location is the secreted. The protein resides in the endosome. It localises to the lysosome. It is found in the cell surface. The protein localises to the endoplasmic reticulum. Its subcellular location is the golgi apparatus. Its activity is regulated as follows. Its proteolytic activity is autoinhibited by the non-covalent binding of the propeptide to the catalytic domain. Inhibited by EGTA. Its function is as follows. Crucial player in the regulation of plasma cholesterol homeostasis. Binds to low-density lipid receptor family members: low density lipoprotein receptor (LDLR), very low density lipoprotein receptor (VLDLR), apolipoprotein E receptor (LRP1/APOER) and apolipoprotein receptor 2 (LRP8/APOER2), and promotes their degradation in intracellular acidic compartments. Acts via a non-proteolytic mechanism to enhance the degradation of the hepatic LDLR through a clathrin LDLRAP1/ARH-mediated pathway. May prevent the recycling of LDLR from endosomes to the cell surface or direct it to lysosomes for degradation. Can induce ubiquitination of LDLR leading to its subsequent degradation. Inhibits intracellular degradation of APOB via the autophagosome/lysosome pathway in a LDLR-independent manner. Involved in the disposal of non-acetylated intermediates of BACE1 in the early secretory pathway. Inhibits epithelial Na(+) channel (ENaC)-mediated Na(+) absorption by reducing ENaC surface expression primarily by increasing its proteasomal degradation. Regulates neuronal apoptosis via modulation of LRP8/APOER2 levels and related anti-apoptotic signaling pathways. This is Proprotein convertase subtilisin/kexin type 9 (PCSK9) from Gorilla gorilla gorilla (Western lowland gorilla).